Consider the following 535-residue polypeptide: Glucans biosynthesis protein D 1 (535 aa).

Positions Met1–Ala28 form a signal peptide, tat-type signal. The tract at residues Arg275–Arg287 is insert.

It belongs to the OpgD/OpgG family. Post-translationally, predicted to be exported by the Tat system. The position of the signal peptide cleavage has not been experimentally proven.

The protein resides in the periplasm. It functions in the pathway glycan metabolism; osmoregulated periplasmic glucan (OPG) biosynthesis. Its function is as follows. Probably involved in the control of the structural glucose backbone of osmoregulated periplasmic glucans (OPGs). The protein is Glucans biosynthesis protein D 1 (opgD1) of Ralstonia nicotianae (strain ATCC BAA-1114 / GMI1000) (Ralstonia solanacearum).